The chain runs to 541 residues: MASMGTLAFDEYGRPFLIIKDQDRKSRLMGLEALKSHIMAAKAVANTMRTSLGPNGLDKMMVDKDGDVTVTNDGATILSMMDVDHQIAKLMVELSKSQDDEIGDGTTGVVVLAGALLEEAEQLLDRGIHPIRIADGYEQAARVAIEHLDKISDSVLVDIKDTEPLIQTAKTTLGSKVVNSCHRQMAEIAVNAVLTVADMERRDVDFELIKVEGKVGGRLEDTKLIKGVIVDKDFSHPRMPKKVEDAKIAILTCPFEPPKPKTKHKLDVTSVEDYKALQKYEKEKFEEMIQQIKETGANLAICQWGFDDEANHLLLQNNLPAVRWVGGPEIELIAIATGGRIVPRFSELTAEKLGFAGLVQEISFGTTKDKMLVIEQCKNSRAVTIFIRGGNKMIIEEAKRSLHDALCVIRNLIRDNRVVYGGGAAETSCALAVSQEADKCPTLEQYAMRAFADALEVIPMALSENSGMNPIQTMTEVRARQVKEMNPALGIDCLHKGTNDMKQQHVIETLIGKKQQISLATQMVRMILKIDDIRKPGESEE.

The residue at position 2 (alanine 2) is an N-acetylalanine. A Glycyl lysine isopeptide (Lys-Gly) (interchain with G-Cter in SUMO2) cross-link involves residue lysine 20. Position 26 is a phosphoserine (serine 26). Glycine 53 is an ADP binding site. Glycine 53 contributes to the ATP binding site. Residue aspartate 104 participates in Mg(2+) binding. 4 residues coordinate ADP: glycine 105, threonine 106, threonine 107, and serine 175. ATP-binding residues include threonine 106 and threonine 107. Residues lysine 210, lysine 214, lysine 265, lysine 275, and lysine 279 each participate in a glycyl lysine isopeptide (Lys-Gly) (interchain with G-Cter in SUMO2) cross-link. Phosphoserine is present on serine 346. Lysine 392 is covalently cross-linked (Glycyl lysine isopeptide (Lys-Gly) (interchain with G-Cter in SUMO2)). Residues glycine 422, aspartate 492, glutamate 508, and lysine 513 each contribute to the ADP site. An ATP-binding site is contributed by glycine 422. Serine 539 is subject to Phosphoserine.

It belongs to the TCP-1 chaperonin family. Component of the chaperonin-containing T-complex (TRiC), a hexadecamer composed of two identical back-to-back stacked rings enclosing a protein folding chamber. Each ring is made up of eight different subunits: TCP1/CCT1, CCT2, CCT3, CCT4, CCT5, CCT6A/CCT6, CCT7, CCT8. Interacts with PACRG. Interacts with DNAAF4. Interacts with DLEC1. Interacts with SPMAP2. In terms of processing, ubiquitinated by the DCX(DCAF12) complex specifically recognizes the diglutamate (Glu-Glu) at the C-terminus, leading to its degradation.

The protein localises to the cytoplasm. The protein resides in the cytoskeleton. It localises to the microtubule organizing center. Its subcellular location is the centrosome. It carries out the reaction ATP + H2O = ADP + phosphate + H(+). Its function is as follows. Component of the chaperonin-containing T-complex (TRiC), a molecular chaperone complex that assists the folding of actin, tubulin and other proteins upon ATP hydrolysis. The TRiC complex mediates the folding of WRAP53/TCAB1, thereby regulating telomere maintenance. As part of the TRiC complex may play a role in the assembly of BBSome, a complex involved in ciliogenesis regulating transports vesicles to the cilia. The polypeptide is T-complex protein 1 subunit epsilon (CCT5) (Pongo abelii (Sumatran orangutan)).